The chain runs to 716 residues: Macrophage-expressed gene 1 protein (716 aa).

The signal sequence occupies residues methionine 1 to glycine 20. Residues glycine 30–asparagine 345 enclose the MACPF domain. Cysteine 34 and cysteine 70 form a disulfide bridge. The next 2 membrane-spanning stretches (beta stranded) occupy residues tyrosine 113–serine 120 and glycine 127–glutamate 132. 2 N-linked (GlcNAc...) asparagine glycosylation sites follow: asparagine 168 and asparagine 185. 2 beta stranded membrane-spanning segments follow: residues alanine 235–phenylalanine 244 and valine 248–tyrosine 256. Asparagine 269 carries an N-linked (GlcNAc...) asparagine glycan. Cysteine 350 and cysteine 369 are oxidised to a cystine. Asparagine 375 is a glycosylation site (N-linked (GlcNAc...) asparagine). 5 cysteine pairs are disulfide-bonded: cysteine 385–cysteine 397, cysteine 435–cysteine 449, cysteine 439–cysteine 445, cysteine 534–cysteine 572, and cysteine 557–cysteine 577. Residues proline 413–alanine 656 are P2. A helical membrane pass occupies residues alanine 656–isoleucine 676. The segment at arginine 693–alanine 716 is disordered. Over residues threonine 703 to alanine 716 the composition is skewed to polar residues.

Belongs to the MPEG1 family. In terms of assembly, homooligomer; predominantly forms a homooligomeric arc-shaped pore complex instead of complete rings of 16 subunits. In terms of processing, proteolytically processed in two steps to generate the Macrophage-expressed gene 1 protein, processed form: cleaved by trypsin in proximity of the helical transmembrane domain releases the ectodomain into the lysosomal lumen to orient the pore-forming domain toward the endogenous membranes, and processed by the asparagine endopeptidase (LGMN). Proteolytic processing in antigen-containing vesicles is pH-dependent. Post-translationally, monoubiquitinated in response to bacterial infection; ubiquitination is required for vesicular localization and antibacterial activity and can be blocked by bacterial cell cycle inhibiting factor (cif).

The protein localises to the cytoplasmic vesicle membrane. Its subcellular location is the cytoplasmic vesicle. It is found in the phagosome membrane. Forms arc- and ring-shaped pre-pores on top of the membrane at neutral to slightly acidic pH conditions and converts to pores upon acidification. Undergoes transition from the pre-pore to the pore in a processive clockwise hand-over-hand process. In the pore state, 2 alpha-helical regions refold into transmembrane hairpins (TMH1 and TMH2) in each protomer that form in the ensemble complex giant beta-barrel transmembrane pores. Functionally, pore-forming protein involved in both innate and adaptive immunity. Plays a central role in antigen cross-presentation in dendritic cells by forming a pore in antigen-containing compartments, thereby promoting delivery of antigens for cross-presentation. Also involved in innate immune response following bacterial infection; shows antibacterial activity against a wide spectrum of Gram-positive, Gram-negative and acid-fast bacteria. Reduces the viability of the intracytosolic pathogen L.monocytogenes by inhibiting acidification of the phagocytic vacuole of host cells which restricts bacterial translocation from the vacuole to the cytosol. Required for the antibacterial activity of reactive oxygen species and nitric oxide. Pore-forming protein that plays a central role in antigen cross-presentation in dendritic cells by mediating delivery of antigens for cross-presentation. Dendritic cells bridge innate and adaptive immunity by capturing exogenous antigens on MHC class-I molecules and presenting them to naive CD8(+) T-cells. Acts by forming a pore in antigen-containing compartments, promoting the release of antigens into the cytosol, enabling generation of MHCI:peptide complexes and T-cell priming. The polypeptide is Macrophage-expressed gene 1 protein (MPEG1) (Pongo abelii (Sumatran orangutan)).